Reading from the N-terminus, the 362-residue chain is MTVTNKPVKPANVPVMDFEAIHASVGNERKKYLRQLDEAWSHHGAIYVINHSIGTRTLEEAFAWCKKFFDLPLAVKNSVHIPPDVSKHFQGWTGTGEAISSQGVWDPDEIERLRKETPTELKEAMELQDPCGTYPPGAPDLNLVEQHLPGFLDFLKKWFAACYKQSLQNMRLVCEILGMEDLDYIGKKFEPRHMSTHSTWNYFLGQPVSQLASGSANRLNAHTDYCQFTMLFQDMVGGLELHDYEEDIYRPVPPIKGAMIVQVGDLLEKQTNGRWRSALHRVTAPSRYMYEGSAGDDDELVQRYSLVFFGHLNLDEMIEPLPGCEKQGKWSTLEWKDRMTAGQWLARRVALEYERKTAATVM.

The region spanning 199-312 is the Fe2OG dioxygenase domain; the sequence is TWNYFLGQPV…RYSLVFFGHL (114 aa). Fe cation-binding residues include His-222, Asp-224, and His-280. 2-oxoglutarate is bound at residue Arg-303.

Belongs to the iron/ascorbate-dependent oxidoreductase family. Requires Fe(2+) as cofactor.

Its pathway is alkaloid biosynthesis. Its function is as follows. 2-oxoglutarate-dependent dioxygenase; part of the gene cluster that mediates the biosynthesis of loline alkaloids, potent insecticidal agents composed of a pyrrolizidine ring system and an uncommon ether bridge linking carbons 2 and 7. Lolines are structurally differentiated by the various modifications of the L-amino group and include norloline, loline, N-methylloline, N-acetylloline, N-acetylnorloline, and N-formylloline. The first committed step is the condensation of O-acetyl-L-homoserine (derived from L-aspartic acid) and L-proline, probably catalyzed by the gamma-type pyridoxal 5'-phosphate(PLP)-dependent enzyme lolC, to give the diamino diacid, NACPP. Ensuing cyclization, decarboxylation, and acetylation steps yield 1-exo-acetamidopyrrolizidine (AcAP). LolO is required for installation of the ether bridge upon the pathway intermediate, 1-exo-acetamidopyrrolizidine (AcAP). In sequential 2-oxoglutarate- and O(2)-consuming steps, lolO removes hydrogens from C2 and C7 of AcAP to form both carbon-oxygen bonds in N-acetylnorloline (NANL), the precursor to all other lolines. The enzymes lolD, lolE, lolF and lolT have also been proposed to be involved in the ether-bridge installation. Further processing of the exocyclic moiety of NANL by fungal N-acetamidase (LolN), methyltransferase (LolM), and cytochrome P450 (LolP) enzymes, with occasional involvement of a plant acetyltransferase, generates the other known lolines. LolN transforms NANL to norlonine which is monomethylated and dimethylated to respectively lonine and N-methyllonine (NML) by lolM. LolP catalyzes hydroxylation of the methyl group in N-methylloline (NML) and further oxygenation to N-formylloline (NFL). A plant acetyltransferase is responsible for the acetylation of loline to form N-acetylloline (NAL). LolA might interact with aspartate kinase to prevent feedback inhibition of its activity by these end products and thereby promote production of l-homoserine from l-aspartate. The sequence is that of 2-oxoglutarate-dependent dioxygenase lolO1 from Epichloe uncinata (Endophyte fungus).